The chain runs to 311 residues: Probable manganese-dependent inorganic pyrophosphatase (311 aa).

Mn(2+) contacts are provided by H9, D13, D15, D75, H97, and D149.

The protein belongs to the PPase class C family. Mn(2+) is required as a cofactor.

It is found in the cytoplasm. It carries out the reaction diphosphate + H2O = 2 phosphate + H(+). This chain is Probable manganese-dependent inorganic pyrophosphatase, found in Lactobacillus acidophilus (strain ATCC 700396 / NCK56 / N2 / NCFM).